A 289-amino-acid polypeptide reads, in one-letter code: Glycine--tRNA ligase alpha subunit (289 aa).

This sequence belongs to the class-II aminoacyl-tRNA synthetase family. As to quaternary structure, tetramer of two alpha and two beta subunits.

It localises to the cytoplasm. The catalysed reaction is tRNA(Gly) + glycine + ATP = glycyl-tRNA(Gly) + AMP + diphosphate. This Rickettsia felis (strain ATCC VR-1525 / URRWXCal2) (Rickettsia azadi) protein is Glycine--tRNA ligase alpha subunit.